The sequence spans 21 residues: Major outer membrane protein (21 aa).

In terms of assembly, disulfide bond interactions within and between MOMP molecules and other components form high molecular-weight oligomers.

It localises to the cell outer membrane. Structural rigidity of the outer membrane of elementary bodies and porin forming, permitting diffusion of solutes through the intracellular reticulate body membrane. This is Major outer membrane protein from Actinobacillus suis.